The chain runs to 286 residues: Probable endonuclease 4 (286 aa).

His72, His112, Glu147, Asp181, His184, His215, Asp228, His230, and Glu260 together coordinate Zn(2+).

This sequence belongs to the AP endonuclease 2 family. It depends on Zn(2+) as a cofactor.

The enzyme catalyses Endonucleolytic cleavage to 5'-phosphooligonucleotide end-products.. Endonuclease IV plays a role in DNA repair. It cleaves phosphodiester bonds at apurinic or apyrimidinic (AP) sites, generating a 3'-hydroxyl group and a 5'-terminal sugar phosphate. In Mycoplasma pneumoniae (strain ATCC 29342 / M129 / Subtype 1) (Mycoplasmoides pneumoniae), this protein is Probable endonuclease 4.